We begin with the raw amino-acid sequence, 159 residues long: Type IV major alpha-pilin (159 aa).

A propeptide spans 1–6 (MNAQKG) (leader sequence). An N-methylphenylalanine modification is found at Phe-7. The helical transmembrane segment at 7-27 (FTLIELMIVIAIIGILAAIAL) threads the bilayer. The segment at 64–87 (VLSEESSTSKENIGLTSSETSTKP) is disordered. Positions 67–87 (EESSTSKENIGLTSSETSTKP) are enriched in polar residues. An intrachain disulfide couples Cys-137 to Cys-156.

Belongs to the N-Me-Phe pilin family. As to quaternary structure, major component of the type IV pilus (T4P) that plays a role in surface and attachment to the host epithelial tissues.

It is found in the fimbrium. It localises to the membrane. This Moraxella bovis protein is Type IV major alpha-pilin (tfpI).